The primary structure comprises 391 residues: MKKVLFPCQICGQNSHGTHFGIVSCRACAAFFRRSVNSKWARKGCLTNFKDKGSCFCKPCRLRKCVEIGMDASKFQYDRDAISAIKHPKIFPSVSYYVGRPEFLMFSDSNVTSQKTFIDVQNLVFEVSRYLDHGCETPIYAENQLKKLTLGFKLMQFDYQNVKFFDKIGKAEFIDIIEYYFLTVAKWIAHFDEFRKLDQSLQIKLLQAIWHVWSKIHKCASTAFYRKSNPNAKPTQKILRNVCMDRMHVHKLDTSWMSDYPTEHVTRFMLTHHVYDFKIVESLLKLDPTDVELTFMFAQLCFEYAGKRFQGEILKITDHFQQVLSNDLHHYYITDQRRERYFQRLTDLMKVNNLIQRSIWETRPHRELGRVFEISKLEFSHPEMFDDSGFC.

Positions 5–77 form a DNA-binding region, nuclear receptor; the sequence is LFPCQICGQN…IGMDASKFQY (73 aa). The segment at 8 to 28 adopts an NR C4-type zinc-finger fold; the sequence is CQICGQNSHGTHFGIVSCRAC. The NR C4-type; atypical zinc finger occupies 41-65; it reads ARKGCLTNFKDKGSCFCKPCRLRKC. The 259-residue stretch at 130 to 388 folds into the NR LBD domain; it reads YLDHGCETPI…FSHPEMFDDS (259 aa).

The protein belongs to the nuclear hormone receptor family.

It is found in the nucleus. In terms of biological role, orphan nuclear receptor. This is Nuclear hormone receptor family member nhr-115 (nhr-115) from Caenorhabditis elegans.